A 249-amino-acid chain; its full sequence is Aquaporin (249 aa).

Residues 1-11 are Cytoplasmic-facing; that stretch reads MTRKWIKKLQS. Residues 12–32 form a helical membrane-spanning segment; the sequence is YIGEFFASFIFGFAVYTSIIG. Topologically, residues 33 to 39 are extracellular; sequence SAQTGQS. Residues 40–60 traverse the membrane as a helical segment; it reads AGPIIVALTIALSGVAIIYSF. The Cytoplasmic portion of the chain corresponds to 61–83; that stretch reads CDITVAHFNPAITFSAMCFRRLP. The short motif at 69 to 71 is the NPA element; it reads NPA. Residues 84–104 form a helical membrane-spanning segment; sequence FFGGIFIIIFQVAGFIIAGLA. Residues 105-133 lie on the Extracellular side of the membrane; that stretch reads SVAVLPGKYKNKLEIARPKRVADNVSRGR. Residues 134-154 form a helical membrane-spanning segment; the sequence is IFGTEFFLTAILVYVAFAVGV. Over 155–179 the chain is Cytoplasmic; that stretch reads NPYTPPKDEHGDQLDPDEGLTEGRK. The helical transmembrane segment at 180-200 threads the bilayer; it reads ITAPLAIGFTLGFCALLGIAS. Topologically, residues 201–223 are extracellular; that stretch reads SGGAFNPGIVLSPMILTGTWDFW. The short motif at 206–208 is the NPG element; sequence NPG. A helical transmembrane segment spans residues 224–246; the sequence is WVYLLGQFSGGLLGGGLQRFLLY. Topologically, residues 247 to 249 are cytoplasmic; it reads KIF.

Belongs to the MIP/aquaporin (TC 1.A.8) family.

The protein localises to the cell membrane. Its function is as follows. Water channel required to facilitate the transport of water across membranes. Involved in osmotolerance. The sequence is that of Aquaporin (AQP) from Vairimorpha ceranae (strain BRL01) (Microsporidian parasite).